The following is a 377-amino-acid chain: Mitogen-activated protein kinase mpkC (377 aa).

The region spanning 20–299 (YVNPQPIGMG…AQDALRHPYL (280 aa)) is the Protein kinase domain. ATP is bound by residues 26–34 (IGMGSFGLV) and Lys-49. The active-site Proton acceptor is the Asp-141. Thr-171 carries the phosphothreonine modification. The TXY signature appears at 171-173 (TGY). Tyr-173 is modified (phosphotyrosine).

This sequence belongs to the protein kinase superfamily. Ser/Thr protein kinase family. MAP kinase subfamily. HOG1 sub-subfamily. It depends on Mg(2+) as a cofactor. In terms of processing, dually phosphorylated on Thr-171 and Tyr-173, which activates the enzyme.

The enzyme catalyses L-seryl-[protein] + ATP = O-phospho-L-seryl-[protein] + ADP + H(+). It carries out the reaction L-threonyl-[protein] + ATP = O-phospho-L-threonyl-[protein] + ADP + H(+). Its activity is regulated as follows. Activated by tyrosine and threonine phosphorylation. In terms of biological role, mitogen-activated protein kinase required for growth on media where sorbitol or mannitol is the sole carbon source. This is Mitogen-activated protein kinase mpkC (mpkc) from Neosartorya fischeri (strain ATCC 1020 / DSM 3700 / CBS 544.65 / FGSC A1164 / JCM 1740 / NRRL 181 / WB 181) (Aspergillus fischerianus).